The chain runs to 225 residues: NAD(P)H-quinone oxidoreductase subunit K, chloroplastic (225 aa).

The [4Fe-4S] cluster site is built by Cys-43, Cys-44, Cys-108, and Cys-139.

Belongs to the complex I 20 kDa subunit family. In terms of assembly, NDH is composed of at least 16 different subunits, 5 of which are encoded in the nucleus. It depends on [4Fe-4S] cluster as a cofactor.

The protein resides in the plastid. It localises to the chloroplast thylakoid membrane. The enzyme catalyses a plastoquinone + NADH + (n+1) H(+)(in) = a plastoquinol + NAD(+) + n H(+)(out). The catalysed reaction is a plastoquinone + NADPH + (n+1) H(+)(in) = a plastoquinol + NADP(+) + n H(+)(out). NDH shuttles electrons from NAD(P)H:plastoquinone, via FMN and iron-sulfur (Fe-S) centers, to quinones in the photosynthetic chain and possibly in a chloroplast respiratory chain. The immediate electron acceptor for the enzyme in this species is believed to be plastoquinone. Couples the redox reaction to proton translocation, and thus conserves the redox energy in a proton gradient. The protein is NAD(P)H-quinone oxidoreductase subunit K, chloroplastic of Oryza nivara (Indian wild rice).